A 141-amino-acid polypeptide reads, in one-letter code: Hemoglobin subunit alpha-D (141 aa).

Residues 1–141 enclose the Globin domain; it reads MLTAEDKKLI…VSAVLAEKYR (141 aa). Positions 58 and 87 each coordinate heme b.

This sequence belongs to the globin family. As to quaternary structure, heterotetramer of two alpha-D chains and two beta chains. As to expression, red blood cells.

Involved in oxygen transport from the lung to the various peripheral tissues. In Meleagris gallopavo (Wild turkey), this protein is Hemoglobin subunit alpha-D (HBAD).